A 132-amino-acid polypeptide reads, in one-letter code: Small ribosomal subunit protein uS8 (132 aa).

Belongs to the universal ribosomal protein uS8 family. In terms of assembly, part of the 30S ribosomal subunit. Contacts proteins S5 and S12.

One of the primary rRNA binding proteins, it binds directly to 16S rRNA central domain where it helps coordinate assembly of the platform of the 30S subunit. This chain is Small ribosomal subunit protein uS8, found in Bifidobacterium longum (strain NCC 2705).